Reading from the N-terminus, the 285-residue chain is Diaminopimelate epimerase (285 aa).

Substrate-binding residues include Asn11 and Asn62. The active-site Proton donor is Cys71. Substrate-binding positions include 72-73 (GN), Asn167, Asn200, and 218-219 (ER). Cys227 acts as the Proton acceptor in catalysis. 228 to 229 (GT) is a substrate binding site.

It belongs to the diaminopimelate epimerase family. As to quaternary structure, homodimer.

It localises to the cytoplasm. It carries out the reaction (2S,6S)-2,6-diaminopimelate = meso-2,6-diaminopimelate. It participates in amino-acid biosynthesis; L-lysine biosynthesis via DAP pathway; DL-2,6-diaminopimelate from LL-2,6-diaminopimelate: step 1/1. Its function is as follows. Catalyzes the stereoinversion of LL-2,6-diaminopimelate (L,L-DAP) to meso-diaminopimelate (meso-DAP), a precursor of L-lysine and an essential component of the bacterial peptidoglycan. The protein is Diaminopimelate epimerase of Agathobacter rectalis (strain ATCC 33656 / DSM 3377 / JCM 17463 / KCTC 5835 / VPI 0990) (Eubacterium rectale).